We begin with the raw amino-acid sequence, 375 residues long: Hydrogenase-1 small chain (375 aa).

Residues M1–A47 constitute a signal peptide (tat-type signal). C64, C67, C162, C196, H234, C237, C262, and C268 together coordinate [4Fe-4S] cluster. [3Fe-4S] cluster is bound by residues C277, C296, and C299. The disordered stretch occupies residues H353–A375.

The protein belongs to the [NiFe]/[NiFeSe] hydrogenase small subunit family. In terms of assembly, heterodimer of a large and a small subunit. It depends on [4Fe-4S] cluster as a cofactor. The cofactor is [3Fe-4S] cluster. Post-translationally, predicted to be exported by the Tat system. The position of the signal peptide cleavage has not been experimentally proven.

The protein localises to the cell membrane. It catalyses the reaction H2 + A = AH2. This chain is Hydrogenase-1 small chain (hyaA), found in Citrobacter freundii.